A 108-amino-acid chain; its full sequence is Large ribosomal subunit protein uL22 (108 aa).

The protein belongs to the universal ribosomal protein uL22 family. As to quaternary structure, part of the 50S ribosomal subunit.

Functionally, this protein binds specifically to 23S rRNA; its binding is stimulated by other ribosomal proteins, e.g. L4, L17, and L20. It is important during the early stages of 50S assembly. It makes multiple contacts with different domains of the 23S rRNA in the assembled 50S subunit and ribosome. Its function is as follows. The globular domain of the protein is located near the polypeptide exit tunnel on the outside of the subunit, while an extended beta-hairpin is found that lines the wall of the exit tunnel in the center of the 70S ribosome. This chain is Large ribosomal subunit protein uL22, found in Desulfatibacillum aliphaticivorans.